Consider the following 372-residue polypeptide: Dof zinc finger protein DOF5.6 (372 aa).

The segment at 73–127 (QKCPRCESTHTKFCYYNNYSLSQPRYFCKTCRRYWTKGGTLRNIPVGGGCRKNKK) adopts a Dof-type zinc-finger fold. Zn(2+) contacts are provided by Cys-75, Cys-78, Cys-100, and Cys-103. The segment at 117–146 (PVGGGCRKNKKPSSSNSSSSTSSGKKPSNI) is disordered. A compositionally biased stretch (low complexity) spans 128–145 (PSSSNSSSSTSSGKKPSN).

The PEAR proteins (e.g. DOF2.4, DOF5.1, DOF3.2, DOF1.1, DOF5.6 and DOF5.3) form a short-range concentration gradient that peaks at protophloem sieve elements (PSE). Preferentially expressed in the vasculature of all organs, including seedlings, roots, stems, buds, leaves, flowers and siliques, and particularly in the cambium, phloem and interfascicular parenchyma cells of inflorescence stems.

The protein localises to the nucleus. In terms of biological role, transcription factor that binds specifically to a 5'-AA[AG]G-3' consensus core sequence. Promotes expression. The PEAR proteins (e.g. DOF2.4, DOF5.1, DOF3.2, DOF1.1, DOF5.6 and DOF5.3) activate gene expression that promotes radial growth of protophloem sieve elements. Involved in the regulation of interfascicular cambium formation and vascular tissue development, particularly at a very early stage during inflorescence stem development; promotes both cambium activity and phloem specification, but prevents xylem specification. In Arabidopsis thaliana (Mouse-ear cress), this protein is Dof zinc finger protein DOF5.6.